The primary structure comprises 87 residues: Putative BTB/POZ domain-containing protein At3g29740 (87 aa).

The BTB domain maps to Val-24–Glu-87.

It participates in protein modification; protein ubiquitination. Its function is as follows. May act as a substrate-specific adapter of an E3 ubiquitin-protein ligase complex (CUL3-RBX1-BTB) which mediates the ubiquitination and subsequent proteasomal degradation of target proteins. The chain is Putative BTB/POZ domain-containing protein At3g29740 from Arabidopsis thaliana (Mouse-ear cress).